The primary structure comprises 179 residues: Large ribosomal subunit protein uL5 (179 aa).

The protein belongs to the universal ribosomal protein uL5 family. In terms of assembly, part of the 50S ribosomal subunit; part of the 5S rRNA/L5/L18/L25 subcomplex. Contacts the 5S rRNA and the P site tRNA. Forms a bridge to the 30S subunit in the 70S ribosome.

This is one of the proteins that bind and probably mediate the attachment of the 5S RNA into the large ribosomal subunit, where it forms part of the central protuberance. In the 70S ribosome it contacts protein S13 of the 30S subunit (bridge B1b), connecting the 2 subunits; this bridge is implicated in subunit movement. Contacts the P site tRNA; the 5S rRNA and some of its associated proteins might help stabilize positioning of ribosome-bound tRNAs. This chain is Large ribosomal subunit protein uL5, found in Photobacterium profundum (strain SS9).